Consider the following 459-residue polypeptide: Zinc finger protein ZPR1 (459 aa).

Residues 1–29 (MSAGGAVEPGLPAAAAAPSAAPARDPGPG) are compositionally biased toward low complexity. The disordered stretch occupies residues 1 to 43 (MSAGGAVEPGLPAAAAAPSAAPARDPGPGHLFRPISAEDEEQQ). 2 consecutive C4-type zinc fingers follow at residues 51 to 83 (CMNC…CEHC) and 259 to 291 (CPEC…CENC). A disordered region spans residues 438–459 (NEELGLNDMKTEGYETGLPAQR).

The protein belongs to the ZPR1 family. As to quaternary structure, component of an import snRNP complex composed of KPNB1, SNUPN, SMN1 and ZNF259. Interacts (via C-terminal region) with SMN1 (via C-terminal region); the interaction occurs after treatment with serum. Interacts with elongation factor 1-alpha EEF1A1; the interaction occurs in a epidermal growth factor (EGF)-dependent manner. Interacts (via zinc fingers) with EGFR (via C-terminal cytoplasmic kinase domain); the interaction is negatively regulated in response to epidermal growth factor (EGF) stimulation and EGFR kinase activity. May also bind to the PDGFR receptor.

It is found in the nucleus. Its subcellular location is the cytoplasm. The protein localises to the nucleolus. The protein resides in the perinuclear region. It localises to the gem. It is found in the cajal body. Its subcellular location is the cell projection. The protein localises to the axon. The protein resides in the growth cone. Its function is as follows. Acts as a signaling molecule that communicates proliferative growth signals from the cytoplasm to the nucleus. Plays a role for the localization and accumulation of the survival motor neuron protein SMN1 in sub-nuclear bodies, including gems and Cajal bodies. Induces neuron differentiation and stimulates axonal growth and formation of growth cone in spinal cord motor neurons. Plays a role in the splicing of cellular pre-mRNAs. May be involved in H(2)O(2)-induced neuronal cell death. The polypeptide is Zinc finger protein ZPR1 (ZNF259) (Bos taurus (Bovine)).